Consider the following 312-residue polypeptide: Olfactory receptor-like protein COR5 (312 aa).

Topologically, residues 1 to 26 are extracellular; sequence MALGNCTTPTTFILSGLTDNPRLQMP. A glycan (N-linked (GlcNAc...) asparagine) is linked at Asn-5. A helical transmembrane segment spans residues 27–49; the sequence is LFMVFLAIYTITLLANLGLIALI. Topologically, residues 50 to 57 are cytoplasmic; that stretch reads SVDFHLQT. A helical membrane pass occupies residues 58-79; sequence PMYIFLQNLSFTDAAYSTVITP. Topologically, residues 80-100 are extracellular; sequence KMLATFLEERRTISYVGCILQ. A disulfide bridge links Cys-97 with Cys-179. The chain crosses the membrane as a helical span at residues 101-120; it reads YFSFVLLTSSECLLLAVMAY. Residues 121-139 are Cytoplasmic-facing; it reads DRYVAICKPLLYPAIMTKA. The chain crosses the membrane as a helical span at residues 140-164; it reads VCWRLVEGLYSLAFLNSLVHTSGLL. The Extracellular segment spans residues 165-205; sequence KLSFCSSNVVNHFFCDNSPLFQISSSSTTLNELLVFIFGSW. A helical membrane pass occupies residues 206 to 226; sequence FAMSSIITTPISYVFIILTVV. Residues 227-239 are Cytoplasmic-facing; it reads RIRSKDGKYKAFS. Residues 240–260 traverse the membrane as a helical segment; that stretch reads TCTSHLMAVSLFHGTVIFMYL. Residues 261–271 lie on the Extracellular side of the membrane; sequence RPVKLFSLDTD. Residues 272 to 292 traverse the membrane as a helical segment; it reads KIASLFYTVVIPMLNPLIYSW. Residues 293–312 are Cytoplasmic-facing; that stretch reads RNKEVKDALRRVIATNVWIH.

This sequence belongs to the G-protein coupled receptor 1 family.

It is found in the cell membrane. Functionally, odorant receptor. This Gallus gallus (Chicken) protein is Olfactory receptor-like protein COR5 (COR5).